A 225-amino-acid chain; its full sequence is Cytidylate kinase (225 aa).

Residue 12–20 (GPSGAGKGT) coordinates ATP.

The protein belongs to the cytidylate kinase family. Type 1 subfamily.

The protein resides in the cytoplasm. It catalyses the reaction CMP + ATP = CDP + ADP. It carries out the reaction dCMP + ATP = dCDP + ADP. The protein is Cytidylate kinase of Stenotrophomonas maltophilia (strain R551-3).